A 320-amino-acid polypeptide reads, in one-letter code: Aspartate carbamoyltransferase catalytic subunit (320 aa).

Carbamoyl phosphate is bound by residues Arg-65 and Thr-66. An L-aspartate-binding site is contributed by Lys-93. 3 residues coordinate carbamoyl phosphate: Arg-115, His-143, and Gln-146. L-aspartate-binding residues include Arg-176 and Arg-230. 2 residues coordinate carbamoyl phosphate: Gly-271 and Pro-272.

Belongs to the aspartate/ornithine carbamoyltransferase superfamily. ATCase family. As to quaternary structure, heterododecamer (2C3:3R2) of six catalytic PyrB chains organized as two trimers (C3), and six regulatory PyrI chains organized as three dimers (R2).

The enzyme catalyses carbamoyl phosphate + L-aspartate = N-carbamoyl-L-aspartate + phosphate + H(+). The protein operates within pyrimidine metabolism; UMP biosynthesis via de novo pathway; (S)-dihydroorotate from bicarbonate: step 2/3. Functionally, catalyzes the condensation of carbamoyl phosphate and aspartate to form carbamoyl aspartate and inorganic phosphate, the committed step in the de novo pyrimidine nucleotide biosynthesis pathway. This chain is Aspartate carbamoyltransferase catalytic subunit, found in Maricaulis maris (strain MCS10) (Caulobacter maris).